We begin with the raw amino-acid sequence, 536 residues long: G-protein coupled receptor Mth2 (536 aa).

Topologically, residues 1–210 (MAERDHYHTI…DDNSTVKIIN (210 aa)) are extracellular. Disulfide bonds link cysteine 17–cysteine 71, cysteine 73–cysteine 78, cysteine 82–cysteine 177, cysteine 83–cysteine 96, and cysteine 138–cysteine 197. N-linked (GlcNAc...) asparagine glycosylation is found at asparagine 24 and asparagine 33. Residues asparagine 103, asparagine 113, asparagine 118, asparagine 159, asparagine 184, and asparagine 203 are each glycosylated (N-linked (GlcNAc...) asparagine). The chain crosses the membrane as a helical span at residues 211–231 (AYAMMFSIPFMMLTIAVYLLI). At 232-241 (PELRNQHGKS) the chain is on the cytoplasmic side. The helical transmembrane segment at 242–262 (LVCYLVGLTVGYTSLCYVQLY) threads the bilayer. Over 263–273 (QVDATGDACKV) the chain is Extracellular. The chain crosses the membrane as a helical span at residues 274-294 (FGYTAYFFFMGAYMWLSVISF). The Cytoplasmic portion of the chain corresponds to 295 to 314 (DLWHNFRGTRGINRFQEKKR). Residues 315-335 (FLFYSLYSWGIAVVFLAFTYI) form a helical membrane-spanning segment. Topologically, residues 336–365 (AQELTNLPAYLKPGIGDGVYCWLDMSNWAA) are extracellular. Residues 366–386 (MIYFYGPILVIVVANTIMFIM) form a helical membrane-spanning segment. Residues 387–417 (TAIKIHGVQREMARIIASENSTKNLRTEKDK) lie on the Cytoplasmic side of the membrane. Residues 418 to 438 (FGLFLRLFLIMGITWLTELIS) traverse the membrane as a helical segment. The Extracellular segment spans residues 439-449 (YFVGSDKGWSK). A helical transmembrane segment spans residues 450-470 (LFYISDLANAMQGFLIFMLFV). At 471–536 (MKKKVKHLIT…VDPQKTTIFR (66 aa)) the chain is on the cytoplasmic side. Positions 487–506 (RDGSNQRQSQYSTKTTSSSV) are disordered. A compositionally biased stretch (low complexity) spans 492 to 505 (QRQSQYSTKTTSSS).

The protein belongs to the G-protein coupled receptor 2 family. Mth subfamily. As to quaternary structure, homodimer.

Its subcellular location is the cell membrane. Functionally, involved in biological aging and stress response. Essential for adult survival. The protein is G-protein coupled receptor Mth2 (mth2) of Drosophila yakuba (Fruit fly).